Reading from the N-terminus, the 1728-residue chain is U3 small nucleolar RNA-associated protein 10 (1728 aa).

HEAT repeat units follow at residues 540–578 (DKDF…LVKE), 881–926 (PANH…MMPA), 986–1024 (FMGS…AYEH), 1191–1229 (LLSI…SEST), 1235–1274 (REAL…KYGK), 1622–1662 (ADAT…GQAA), and 1683–1721 (LQAL…KLGE).

Belongs to the HEATR1/UTP10 family. As to quaternary structure, component of the ribosomal small subunit (SSU) processome.

Its subcellular location is the nucleus. The protein localises to the nucleolus. Involved in nucleolar processing of pre-18S ribosomal RNA. Involved in ribosome biosynthesis. The protein is U3 small nucleolar RNA-associated protein 10 of Chaetomium globosum (strain ATCC 6205 / CBS 148.51 / DSM 1962 / NBRC 6347 / NRRL 1970) (Soil fungus).